Consider the following 2531-residue polypeptide: Putative neurobeachin homolog (2531 aa).

Composition is skewed to acidic residues over residues 1–10 (MDISETEYND), 26–35 (EDEVNDEESN), and 62–74 (EPSDDQQNVEESE). Disordered stretches follow at residues 1–101 (MDIS…SPPP), 1363–1398 (NDGDHASIKNGSDHSENGADEETEEKGEQGQGDNGG), 1420–1440 (EELKKMHQSNGRRPSTLMPPQ), and 1642–1670 (RFVPNPYGSRHEEANLPEGEKNEEPEISE). A compositionally biased stretch (basic and acidic residues) spans 1363–1379 (NDGDHASIKNGSDHSEN). The span at 1427–1440 (QSNGRRPSTLMPPQ) shows a compositional bias: polar residues. Positions 1650–1670 (SRHEEANLPEGEKNEEPEISE) are enriched in basic and acidic residues. One can recognise a BEACH-type PH domain in the interval 1714 to 1822 (PSSQSACFST…TVRKVVYQLP (109 aa)). Positions 1841-2130 (MTPRQLFKHS…QLLAEAHPPR (290 aa)) constitute a BEACH domain. WD repeat units follow at residues 2289-2332 (GHGD…GFIA), 2350-2389 (GHEASISALCVSAEHGLVVSGCEDGVILIHTTASDLLRRI), 2429-2468 (LSEEKIECVTVTRDGEFAVTGAVNGRITIWRMFPLNKLYT), and 2471-2510 (PLNSAVRSVAVVASHRFILGGLDSGAIVVFNADFNRWHYE).

It belongs to the WD repeat neurobeachin family. Interacts with RII subunit of PKA.

It is found in the cytoplasm. The protein localises to the membrane. Its subcellular location is the nucleus. Binds to type II regulatory subunits of protein kinase A and anchors/targets them to the membrane. May anchor the kinase to cytoskeletal and/or organelle-associated proteins. Regulates endosomal traffic in polarized epithelial cells such as the vulval precursor cells and intestinal cells. Thought to act as a negative regulator of lin-12 activity in vulval precursor cells. May have a role in the internalization process from basolateral surface of polarized epithelial cells. The polypeptide is Putative neurobeachin homolog (Caenorhabditis briggsae).